The following is a 307-amino-acid chain: Myoblast determination protein 1 homolog (307 aa).

The bHLH domain maps to 109-160 (DRRKAATLRERRRLSKVNEAFETLKRCTNTNPNQRLPKVEILRNAISYIESL). Residues 271-307 (TATSSGPPPVDGRGSPGPLQASSPRSSREPNLIYQVL) form a disordered region.

In terms of assembly, efficient DNA binding requires dimerization with another bHLH protein. Expressed in fast and myotomal muscle. Very weak expression in brain, skin and gonads.

Its subcellular location is the nucleus. In terms of biological role, may act as a transcriptional activator that promotes transcription of muscle-specific target genes and plays a role in muscle differentiation. The polypeptide is Myoblast determination protein 1 homolog (myod) (Takifugu rubripes (Japanese pufferfish)).